The following is a 213-amino-acid chain: Small ribosomal subunit protein uS3 (213 aa).

Positions Ile-38–Arg-106 constitute a KH type-2 domain.

This sequence belongs to the universal ribosomal protein uS3 family. As to quaternary structure, part of the 30S ribosomal subunit. Forms a tight complex with proteins S10 and S14.

Binds the lower part of the 30S subunit head. Binds mRNA in the 70S ribosome, positioning it for translation. The chain is Small ribosomal subunit protein uS3 from Desulfovibrio desulfuricans (strain ATCC 27774 / DSM 6949 / MB).